A 442-amino-acid polypeptide reads, in one-letter code: Glutamyl-tRNA(Gln) amidotransferase subunit A (442 aa).

Residues Lys-50 and Ser-125 each act as charge relay system in the active site. Ser-149 acts as the Acyl-ester intermediate in catalysis.

Belongs to the amidase family. GatA subfamily. Heterotrimer of A, B and C subunits.

The catalysed reaction is L-glutamyl-tRNA(Gln) + L-glutamine + ATP + H2O = L-glutaminyl-tRNA(Gln) + L-glutamate + ADP + phosphate + H(+). Functionally, allows the formation of correctly charged Gln-tRNA(Gln) through the transamidation of misacylated Glu-tRNA(Gln) in organisms which lack glutaminyl-tRNA synthetase. The reaction takes place in the presence of glutamine and ATP through an activated gamma-phospho-Glu-tRNA(Gln). The chain is Glutamyl-tRNA(Gln) amidotransferase subunit A from Nitratiruptor sp. (strain SB155-2).